Here is a 115-residue protein sequence, read N- to C-terminus: Ribonuclease P protein component (115 aa).

It belongs to the RnpA family. Consists of a catalytic RNA component (M1 or rnpB) and a protein subunit.

It carries out the reaction Endonucleolytic cleavage of RNA, removing 5'-extranucleotides from tRNA precursor.. In terms of biological role, RNaseP catalyzes the removal of the 5'-leader sequence from pre-tRNA to produce the mature 5'-terminus. It can also cleave other RNA substrates such as 4.5S RNA. The protein component plays an auxiliary but essential role in vivo by binding to the 5'-leader sequence and broadening the substrate specificity of the ribozyme. The chain is Ribonuclease P protein component from Bacillus cereus (strain ATCC 10987 / NRS 248).